The primary structure comprises 121 residues: Flagellar protein FliT (121 aa).

The tract at residues 1–50 is required for homodimerization; the sequence is MNHAPHLYFAWQQLVEKSQLMLRLATEEQWDELIASEMAYVNAVQEIAHL. Residues 60-98 are fliD binding; that stretch reads MQEQLRPMLRLILDNESKVKQLLQIRMDELAKLVGQSSV.

It belongs to the FliT family. In terms of assembly, homodimer. Interacts with FliD and FlhC.

The protein resides in the cytoplasm. It is found in the cytosol. In terms of biological role, dual-function protein that regulates the transcription of class 2 flagellar operons and that also acts as an export chaperone for the filament-capping protein FliD. As a transcriptional regulator, acts as an anti-FlhDC factor; it directly binds FlhC, thus inhibiting the binding of the FlhC/FlhD complex to class 2 promoters, resulting in decreased expression of class 2 flagellar operons. As a chaperone, effects FliD transition to the membrane by preventing its premature polymerization, and by directing it to the export apparatus. This Escherichia coli O139:H28 (strain E24377A / ETEC) protein is Flagellar protein FliT.